The chain runs to 279 residues: Large ribosomal subunit protein uL2 (279 aa).

Residues 227–279 (GVAMNPVDHPMGGGEGKTSGGRHPVSPWGFPTKGKKTRDPNKLSSKFIKSKKR) are disordered.

The protein belongs to the universal ribosomal protein uL2 family. Part of the 50S ribosomal subunit. Forms a bridge to the 30S subunit in the 70S ribosome.

In terms of biological role, one of the primary rRNA binding proteins. Required for association of the 30S and 50S subunits to form the 70S ribosome, for tRNA binding and peptide bond formation. It has been suggested to have peptidyltransferase activity; this is somewhat controversial. Makes several contacts with the 16S rRNA in the 70S ribosome. This Neorickettsia sennetsu (strain ATCC VR-367 / Miyayama) (Ehrlichia sennetsu) protein is Large ribosomal subunit protein uL2.